The sequence spans 211 residues: Peptide methionine sulfoxide reductase MsrA (211 aa).

The active site involves cysteine 60.

Belongs to the MsrA Met sulfoxide reductase family.

It carries out the reaction L-methionyl-[protein] + [thioredoxin]-disulfide + H2O = L-methionyl-(S)-S-oxide-[protein] + [thioredoxin]-dithiol. The catalysed reaction is [thioredoxin]-disulfide + L-methionine + H2O = L-methionine (S)-S-oxide + [thioredoxin]-dithiol. Has an important function as a repair enzyme for proteins that have been inactivated by oxidation. Catalyzes the reversible oxidation-reduction of methionine sulfoxide in proteins to methionine. This is Peptide methionine sulfoxide reductase MsrA from Methanosarcina mazei (strain ATCC BAA-159 / DSM 3647 / Goe1 / Go1 / JCM 11833 / OCM 88) (Methanosarcina frisia).